A 79-amino-acid polypeptide reads, in one-letter code: Putative defensin-like protein 309 (79 aa).

Residues 1–19 form the signal peptide; sequence MKILAFFIFVLLIFSCSSS. Intrachain disulfides connect Cys-31–Cys-50, Cys-37–Cys-55, and Cys-41–Cys-57.

The protein belongs to the DEFL family.

The protein localises to the secreted. In Arabidopsis thaliana (Mouse-ear cress), this protein is Putative defensin-like protein 309.